Reading from the N-terminus, the 196-residue chain is uncharacterized protein (196 aa).

A helical membrane pass occupies residues 20-40 (GALALGCIALLLMGIVGCTTV).

Its subcellular location is the membrane. This is an uncharacterized protein from Mycobacterium tuberculosis (strain CDC 1551 / Oshkosh).